We begin with the raw amino-acid sequence, 294 residues long: N-acetylmuramic acid 6-phosphate etherase (294 aa).

Positions Val-54 to Lys-217 constitute an SIS domain. Glu-82 (proton donor) is an active-site residue. Residue Glu-113 is part of the active site.

The protein belongs to the GCKR-like family. MurNAc-6-P etherase subfamily. In terms of assembly, homodimer.

The catalysed reaction is N-acetyl-D-muramate 6-phosphate + H2O = N-acetyl-D-glucosamine 6-phosphate + (R)-lactate. Its pathway is amino-sugar metabolism; N-acetylmuramate degradation. Specifically catalyzes the cleavage of the D-lactyl ether substituent of MurNAc 6-phosphate, producing GlcNAc 6-phosphate and D-lactate. In Bacillus thuringiensis subsp. konkukian (strain 97-27), this protein is N-acetylmuramic acid 6-phosphate etherase.